Consider the following 356-residue polypeptide: HTH-type transcriptional regulator AglR (356 aa).

An HTH lacI-type domain is found at 1 to 57 (MPVNLKQLAELLGLSQTTVSRALNGYPEVNAETRARVLEAVRETGYRPNRAAQRLAT). A DNA-binding region (H-T-H motif) is located at residues 5 to 24 (LKQLAELLGLSQTTVSRALN). Residues 337–356 (TGPAPDRSPLPNPSPQVGGA) are disordered.

In terms of biological role, probable regulatory protein for the binding-protein-dependent transport system for alpha-glucosides such as sucrose, maltose and trehalose. The protein is HTH-type transcriptional regulator AglR (aglR) of Rhizobium meliloti (strain 1021) (Ensifer meliloti).